The following is a 37-amino-acid chain: Cytochrome b6-f complex subunit 5 (37 aa).

The helical transmembrane segment at 5–25 threads the bilayer; sequence FLFGIVLGLIPITLAGLFVTA.

The protein belongs to the PetG family. In terms of assembly, the 4 large subunits of the cytochrome b6-f complex are cytochrome b6, subunit IV (17 kDa polypeptide, PetD), cytochrome f and the Rieske protein, while the 4 small subunits are PetG, PetL, PetM and PetN. The complex functions as a dimer.

Its subcellular location is the plastid. It is found in the chloroplast thylakoid membrane. Component of the cytochrome b6-f complex, which mediates electron transfer between photosystem II (PSII) and photosystem I (PSI), cyclic electron flow around PSI, and state transitions. PetG is required for either the stability or assembly of the cytochrome b6-f complex. The protein is Cytochrome b6-f complex subunit 5 of Capsella bursa-pastoris (Shepherd's purse).